Here is a 1453-residue protein sequence, read N- to C-terminus: Collagen alpha-1(I) chain (1453 aa).

The signal sequence occupies residues 1-22; that stretch reads MFSFVDLRLLLLLGATALLTHG. A propeptide spans 23-151 (N-terminal propeptide); sequence QEDIPEVSCI…PPGLGGNFAS (129 aa). The VWFC domain occupies 29 to 87; sequence VSCIHNGLRVPNGETWKPEVCLICICHNGTAVCDDVQCNEELDCPNPQRREGECCAFCP. Residue Asn-56 is glycosylated (N-linked (GlcNAc...) asparagine). Positions 94-1210 are disordered; it reads NSEDVGVEGP…GGRYYRADDA (1117 aa). 2 stretches are compositionally biased toward pro residues: residues 109–118 and 128–143; these read PQGPRGPVGP and PGLP…PGPP. Residues 152–167 are nonhelical region (N-terminal); the sequence is QMSYGYDEKSAGVSVP. Lys-160 is subject to Allysine. Ser-161 is modified (phosphoserine). The triple-helical region stretch occupies residues 168-1181; sequence GPMGPSGPRG…PGPPGPPGPP (1014 aa). 4-hydroxyproline is present on residues Pro-179, Pro-182, Pro-185, Pro-194, Pro-197, Pro-200, Pro-215, Pro-230, Pro-236, Pro-245, and Pro-251. The segment covering 198–207 has biased composition (gly residues); sequence GEPGGSGPMG. A compositionally biased stretch (basic and acidic residues) spans 218-232; that stretch reads NGDDGEAGKPGRPGE. The residue at position 254 (Lys-254) is a 5-hydroxylysine; alternate. Lys-254 carries an O-linked (Gal...) hydroxylysine; alternate glycan. Phosphoserine is present on Ser-260. A compositionally biased stretch (low complexity) spans 268–284; the sequence is DAGPAGPKGEPGSPGEN. 4-hydroxyproline is present on residues Pro-278, Pro-281, Pro-287, Pro-296, and Pro-302. The span at 307-320 shows a compositional bias: low complexity; that stretch reads TAGARGNDGAVGAA. Residues 322–334 are compositionally biased toward pro residues; that stretch reads PPGPTGPTGPPGF. 4-hydroxyproline is present on residues Pro-323, Pro-332, Pro-335, Pro-362, Pro-365, Pro-377, Pro-383, Pro-392, Pro-398, Pro-401, and Pro-416. Residues 368 to 407 show a composition bias toward low complexity; the sequence is AGAAGPAGNPGADGQPGAKGANGAPGIAGAPGFPGARGPS. Lys-419 is modified (5-hydroxylysine). Pro-425, Pro-428, Pro-440, Pro-449, Pro-464, Pro-470, Pro-479, and Pro-485 each carry 4-hydroxyproline. The span at 474–483 shows a compositional bias: gly residues; that stretch reads GERGGPGSRG. Position 494 is a 5-hydroxylysine (Lys-494). A compositionally biased stretch (low complexity) spans 499–515; it reads ERGAPGPAGPKGSPGEA. A 4-hydroxyproline mark is found at Pro-503, Pro-512, Pro-518, Pro-524, Pro-533, Pro-536, Pro-545, Pro-554, Pro-560, Pro-572, Pro-581, Pro-590, Pro-593, Pro-611, Pro-629, Pro-635, Pro-641, Pro-647, Pro-653, Pro-659, Pro-671, Pro-680, Pro-692, Pro-704, Pro-707, Pro-713, Pro-719, and Pro-728. Over residues 527–566 the composition is skewed to low complexity; it reads KGLTGSPGSPGPDGKTGPPGPAGQDGRPGPAGPPGARGQA. Residues 623 to 650 are compositionally biased toward low complexity; that stretch reads QGPAGSPGFQGLPGPAGPPGEAGKPGEQ. 2 stretches are compositionally biased toward low complexity: residues 685–695 and 703–716; these read PRGNNGAPGND and APGA…PGLQ. The Cell attachment site signature appears at 734–736; the sequence is RGD. 5-hydroxylysine is present on Lys-740. 3 positions are modified to 4-hydroxyproline: Pro-746, Pro-761, and Pro-767. Ser-776 is subject to Phosphoserine. Residues Pro-788, Pro-797, Pro-806, Pro-812, Pro-830, Pro-839, and Pro-848 each carry the 4-hydroxyproline modification. Positions 800 to 815 are enriched in low complexity; the sequence is AGFAGPPGADGQPGAK. The segment covering 829-841 has biased composition (pro residues); it reads PPGPAGPAGPPGP. A compositionally biased stretch (low complexity) spans 842 to 872; it reads IGNVGAPGPKGPRGAAGPPGATGFPGAAGRV. A 5-hydroxylysine modification is found at Lys-851. A 4-hydroxyproline mark is found at Pro-860 and Pro-866. The residue at position 874 (Pro-874) is a 3-hydroxyproline. 4-hydroxyproline occurs at positions 875, 884, 887, 908, 917, 926, 935, 953, 962, 965, 971, 986, 992, 998, 1007, and 1013. The segment covering 901–910 has biased composition (low complexity); it reads ETGPAGRPGE. Low complexity predominate over residues 920 to 935; that stretch reads AGEKGSPGADGPAGSP. Pro residues predominate over residues 985 to 995; it reads PPGPMGPPGLA. The span at 997–1012 shows a compositional bias: low complexity; it reads PPGESGREGSPGAEGS. Lys-1022 carries the post-translational modification 5-hydroxylysine. Over residues 1031-1046 the composition is skewed to pro residues; that stretch reads AGPPGAPGAPGAPGPV. Pro-1034, Pro-1037, and Pro-1040 each carry 4-hydroxyproline. The span at 1067–1081 shows a compositional bias: low complexity; the sequence is IGPAGARGPAGPQGP. The Cell attachment site signature appears at 1082–1084; the sequence is RGD. The segment covering 1082–1096 has biased composition (basic and acidic residues); it reads RGDKGETGEQGDRGI. Lys-1085 carries the 5-hydroxylysine modification. Lys-1097 bears the 5-hydroxylysine; alternate mark. The O-linked (Gal...) hydroxylysine; alternate glycan is linked to Lys-1097. The segment covering 1102–1148 has biased composition (low complexity); the sequence is FSGLQGPPGSPGSPGEQGPSGASGPAGPRGPPGSAGSPGKDGLNGLP. A 4-hydroxyproline mark is found at Pro-1109, Pro-1112, Pro-1115, Pro-1133, and Pro-1148. Pro-1153 bears the 3-hydroxyproline mark. At Pro-1154 the chain carries 4-hydroxyproline. Pro residues predominate over residues 1166–1181; sequence AGPPGPPGPPGPPGPP. A 3-hydroxyproline modification is found at Pro-1168. Pro-1169 is subject to 4-hydroxyproline. A 3-hydroxyproline modification is found at Pro-1171. Pro-1172 is modified (4-hydroxyproline). 3-hydroxyproline is present on Pro-1174. 3 positions are modified to 4-hydroxyproline: Pro-1175, Pro-1178, and Pro-1181. The interval 1182–1207 is nonhelical region (C-terminal); sequence SGGYDFSFLPQPPQEKSQDGGRYYRA. An Allysine modification is found at Lys-1197. Basic and acidic residues predominate over residues 1197 to 1210; that stretch reads KSQDGGRYYRADDA. The propeptide at 1208-1453 is C-terminal propeptide; that stretch reads DDANVVRDRD…GLDIGPACFV (246 aa). One can recognise a Fibrillar collagen NC1 domain in the interval 1218–1453; sequence LEVDTTLKSL…GLDIGPACFV (236 aa). 3 disulfide bridges follow: Cys-1248–Cys-1280, Cys-1288–Cys-1451, and Cys-1359–Cys-1404. Asp-1266, Asn-1268, Gln-1269, Cys-1271, and Asp-1274 together coordinate Ca(2+). Asn-1354 is a glycosylation site (N-linked (GlcNAc...) asparagine).

This sequence belongs to the fibrillar collagen family. As to quaternary structure, trimers of one alpha 2(I) and two alpha 1(I) chains. Interacts with MRC2. Interacts with TRAM2. Interacts with MFAP4 in a Ca (2+)-dependent manner. Contains mostly 4-hydroxyproline. Proline residues at the third position of the tripeptide repeating unit (G-X-Y) are hydroxylated in some or all of the chains. Post-translationally, contains 3-hydroxyproline at a few sites. This modification occurs on the first proline residue in the sequence motif Gly-Pro-Hyp, where Hyp is 4-hydroxyproline. In terms of processing, lysine residues at the third position of the tripeptide repeating unit (G-X-Y) are 5-hydroxylated in some or all of the chains. O-glycosylated on hydroxylated lysine residues. The O-linked glycan consists of a Glc-Gal disaccharide. In terms of tissue distribution, forms the fibrils of tendon, ligaments and bones. In bones the fibrils are mineralized with calcium hydroxyapatite.

It localises to the secreted. Its subcellular location is the extracellular space. The protein localises to the extracellular matrix. Type I collagen is a member of group I collagen (fibrillar forming collagen). The protein is Collagen alpha-1(I) chain of Mus musculus (Mouse).